The sequence spans 144 residues: Cysteine desulfuration protein SufE (144 aa).

The active-site Cysteine persulfide intermediate is Cys-51.

Belongs to the SufE family. As to quaternary structure, homodimer. Interacts with SufS.

It localises to the cytoplasm. Its pathway is cofactor biosynthesis; iron-sulfur cluster biosynthesis. In terms of biological role, participates in cysteine desulfuration mediated by SufS. Cysteine desulfuration mobilizes sulfur from L-cysteine to yield L-alanine and constitutes an essential step in sulfur metabolism for biosynthesis of a variety of sulfur-containing biomolecules. Functions as a sulfur acceptor for SufS, by mediating the direct transfer of the sulfur atom from the S-sulfanylcysteine of SufS, an intermediate product of cysteine desulfuration process. The chain is Cysteine desulfuration protein SufE from Wigglesworthia glossinidia brevipalpis.